A 622-amino-acid chain; its full sequence is Elongation factor 4 (622 aa).

The 185-residue stretch at 17-201 folds into the tr-type G domain; it reads ALIRNFCIIA…KVVAEVPAPV (185 aa). GTP-binding positions include 29–34 and 148–151; these read DHGKST and NKID.

This sequence belongs to the TRAFAC class translation factor GTPase superfamily. Classic translation factor GTPase family. LepA subfamily.

Its subcellular location is the cell membrane. The enzyme catalyses GTP + H2O = GDP + phosphate + H(+). In terms of biological role, required for accurate and efficient protein synthesis under certain stress conditions. May act as a fidelity factor of the translation reaction, by catalyzing a one-codon backward translocation of tRNAs on improperly translocated ribosomes. Back-translocation proceeds from a post-translocation (POST) complex to a pre-translocation (PRE) complex, thus giving elongation factor G a second chance to translocate the tRNAs correctly. Binds to ribosomes in a GTP-dependent manner. This chain is Elongation factor 4, found in Streptomyces coelicolor (strain ATCC BAA-471 / A3(2) / M145).